A 181-amino-acid polypeptide reads, in one-letter code: MMLRVLVGAVLPAMLLAAPPPINKLALFPDKSAWCEAKNITQIVGHSGCEAKSIQNRACLGQCFSYSVPNTFPQSTESLVHCDSCMPAQSMWEIVTLECPGHEEVPRVDKLVEKILHCSCQACGKEPSHEGLSVYVQGEDGPGSQPGTHPHPHPHPHPGGQTPEPEDPPGAPHTEEEGAED.

A signal peptide spans 1 to 16 (MMLRVLVGAVLPAMLL). Intrachain disulfides connect Cys-35-Cys-85, Cys-49-Cys-99, Cys-59-Cys-118, Cys-63-Cys-120, and Cys-82-Cys-123. The CTCK domain occupies 35-124 (CEAKNITQIV…ILHCSCQACG (90 aa)). The disordered stretch occupies residues 132–181 (LSVYVQGEDGPGSQPGTHPHPHPHPHPGGQTPEPEDPPGAPHTEEEGAED).

It belongs to the DAN family. In terms of assembly, homodimer. Most abundant in normal lung and meningioma.

The protein resides in the secreted. Functionally, possible candidate as a tumor suppressor gene of neuroblastoma. May play an important role in preventing cells from entering the final stage (G1/S) of the transformation process. This chain is Neuroblastoma suppressor of tumorigenicity 1 (NBL1), found in Homo sapiens (Human).